We begin with the raw amino-acid sequence, 354 residues long: Phospho-N-acetylmuramoyl-pentapeptide-transferase (354 aa).

10 consecutive transmembrane segments (helical) span residues 23–43, 66–86, 88–108, 138–158, 161–181, 193–213, 227–247, 257–277, 282–302, and 331–351; these read IAFF…IAWA, TPTM…LLCS, LTNT…FIGF, FALS…FIPF, YALF…ITAS, GLAS…VYLC, VVGV…ILGF, VFMG…TGVV, ILLI…ILQV, and KIIV…LTTL.

Belongs to the glycosyltransferase 4 family. MraY subfamily. Mg(2+) serves as cofactor.

The protein localises to the cell inner membrane. It carries out the reaction UDP-N-acetyl-alpha-D-muramoyl-L-alanyl-gamma-D-glutamyl-meso-2,6-diaminopimeloyl-D-alanyl-D-alanine + di-trans,octa-cis-undecaprenyl phosphate = di-trans,octa-cis-undecaprenyl diphospho-N-acetyl-alpha-D-muramoyl-L-alanyl-D-glutamyl-meso-2,6-diaminopimeloyl-D-alanyl-D-alanine + UMP. The protein operates within cell wall biogenesis; peptidoglycan biosynthesis. Its function is as follows. Catalyzes the initial step of the lipid cycle reactions in the biosynthesis of the cell wall peptidoglycan: transfers peptidoglycan precursor phospho-MurNAc-pentapeptide from UDP-MurNAc-pentapeptide onto the lipid carrier undecaprenyl phosphate, yielding undecaprenyl-pyrophosphoryl-MurNAc-pentapeptide, known as lipid I. This Campylobacter hominis (strain ATCC BAA-381 / DSM 21671 / CCUG 45161 / LMG 19568 / NCTC 13146 / CH001A) protein is Phospho-N-acetylmuramoyl-pentapeptide-transferase.